The following is a 684-amino-acid chain: Protein ecdysoneless (684 aa).

A compositionally biased stretch (acidic residues) spans 491-501 (EPELDSDDDEP). Disordered stretches follow at residues 491–528 (EPELDSDDDEPPPQANGSTGLTAKVKKNPSMRKACQRN) and 603–624 (TSVGKSFHGKKKTAPQADEDDF).

Belongs to the ECD family. Expressed in the ecdysone-producing larval ring gland, nervous system, imaginal disks and gonads.

It localises to the cytoplasm. In terms of biological role, required in both the follicle cells and the germline for oocyte development. This Drosophila melanogaster (Fruit fly) protein is Protein ecdysoneless.